The following is a 138-amino-acid chain: Glutaredoxin-C7 (138 aa).

Residues 17–40 (SSTRGGGGGGMLGLTLFDPPGGEQ) form a disordered region. The region spanning 42 to 137 (AERIGRLVRE…PRLREVGALC (96 aa)) is the Glutaredoxin domain. Cysteine 62 and cysteine 65 are disulfide-bonded.

This sequence belongs to the glutaredoxin family. CC-type subfamily.

The protein resides in the cytoplasm. Has a glutathione-disulfide oxidoreductase activity in the presence of NADPH and glutathione reductase. Reduces low molecular weight disulfides and proteins. The protein is Glutaredoxin-C7 (GRXC7) of Oryza sativa subsp. japonica (Rice).